Consider the following 541-residue polypeptide: tRNA uridine(34) acetyltransferase (541 aa).

The radical S-adenosyl-L-methionine (rSAM) stretch occupies residues Lys-76–Glu-336. The Radical SAM core domain maps to Arg-79 to Lys-350. 3 residues coordinate [4Fe-4S] cluster: Cys-96, Cys-101, and Cys-104. Residues Lys-156, Gln-467–Val-470, Tyr-491–Arg-493, and Tyr-524 each bind acetyl-CoA. Residues Val-401–Glu-541 enclose the N-acetyltransferase domain.

This sequence belongs to the ELP3 family. [4Fe-4S] cluster is required as a cofactor.

The catalysed reaction is uridine(34) in tRNA + acetyl-CoA + S-adenosyl-L-methionine + H2O = 5-(carboxymethyl)uridine(34) in tRNA + 5'-deoxyadenosine + L-methionine + CoA + 2 H(+). Its pathway is tRNA modification. TRNA uridine(34) acetyltransferase, which mediates formation of carboxymethyluridine in the wobble base at position 34 in tRNAs. The proposed mechanism is the following: (i) recruits S-adenosyl-L-methionine and cleaves it to generate a 5'-deoxyadenosine radical (5'-dA) in the radical S-adenosyl-L-methionine (rSAM) region, (ii) hydrolyzes acetyl-CoA in the N-acetyltransferase domain and (iii) an acetyl radical is formed by the products of the two domains and (iv) is transferred onto the C5 position of uridine(34) in the bound tRNA molecule. Does not show protein lysine acetyltransferase activity. In Methanocaldococcus jannaschii (strain ATCC 43067 / DSM 2661 / JAL-1 / JCM 10045 / NBRC 100440) (Methanococcus jannaschii), this protein is tRNA uridine(34) acetyltransferase.